A 94-amino-acid chain; its full sequence is Probable Fe(2+)-trafficking protein (94 aa).

Belongs to the Fe(2+)-trafficking protein family.

In terms of biological role, could be a mediator in iron transactions between iron acquisition and iron-requiring processes, such as synthesis and/or repair of Fe-S clusters in biosynthetic enzymes. The sequence is that of Probable Fe(2+)-trafficking protein from Alcanivorax borkumensis (strain ATCC 700651 / DSM 11573 / NCIMB 13689 / SK2).